The sequence spans 453 residues: Na(+)/H(+) antiporter NhaA 2 (453 aa).

12 helical membrane-spanning segments follow: residues 23–43, 74–94, 111–131, 139–159, 168–188, 191–211, 214–234, 235–255, 316–336, 345–365, 386–406, and 419–439; these read FLHI…AALI, LHFW…GMEI, LPMA…LSFG, GWAV…ALLG, VFLL…IAFF, GGLD…VIGL, IGVG…LGIL, LTGA…PVTA, VAFG…LSGV, WVMI…IVSV, IMLV…IANL, and LGVL…GVWS.

The protein belongs to the NhaA Na(+)/H(+) (TC 2.A.33) antiporter family.

The protein resides in the cell inner membrane. The enzyme catalyses Na(+)(in) + 2 H(+)(out) = Na(+)(out) + 2 H(+)(in). Functionally, na(+)/H(+) antiporter that extrudes sodium in exchange for external protons. This chain is Na(+)/H(+) antiporter NhaA 2, found in Pseudomonas putida (strain ATCC 47054 / DSM 6125 / CFBP 8728 / NCIMB 11950 / KT2440).